We begin with the raw amino-acid sequence, 177 residues long: Alkyl hydroperoxide reductase AhpD (177 aa).

The active-site Proton donor is the cysteine 131. Cysteine 131 and cysteine 134 are joined by a disulfide. Cysteine 134 (cysteine sulfenic acid (-SOH) intermediate) is an active-site residue.

Belongs to the AhpD family. As to quaternary structure, homotrimer.

The catalysed reaction is N(6)-[(R)-dihydrolipoyl]-L-lysyl-[lipoyl-carrier protein] + a hydroperoxide = N(6)-[(R)-lipoyl]-L-lysyl-[lipoyl-carrier protein] + an alcohol + H2O. In terms of biological role, antioxidant protein with alkyl hydroperoxidase activity. Required for the reduction of the AhpC active site cysteine residues and for the regeneration of the AhpC enzyme activity. This Streptomyces avermitilis (strain ATCC 31267 / DSM 46492 / JCM 5070 / NBRC 14893 / NCIMB 12804 / NRRL 8165 / MA-4680) protein is Alkyl hydroperoxide reductase AhpD.